Here is a 156-residue protein sequence, read N- to C-terminus: Hemerythrin-like protein (156 aa).

Residues His54, His84, Glu88, His109, His113, His142, and Asp147 each contribute to the Fe cation site.

Belongs to the hemerythrin family.

In terms of biological role, oxygen-binding protein. The oxygen-binding site contains two iron atoms. This Nematostella vectensis (Starlet sea anemone) protein is Hemerythrin-like protein.